Here is a 333-residue protein sequence, read N- to C-terminus: Holliday junction branch migration complex subunit RuvB (333 aa).

The tract at residues 1–181 (MNDILNKEPM…FGISSHMEYY (181 aa)) is large ATPase domain (RuvB-L). Residues Leu20, Arg21, Gly62, Lys65, Thr66, Thr67, 128–130 (EDF), Arg171, Tyr181, and Arg218 each bind ATP. Residue Thr66 coordinates Mg(2+). The segment at 182–252 (QERDLEEIVK…ITDKALTILD (71 aa)) is small ATPAse domain (RuvB-S). The tract at residues 255-333 (AAGLDYIDQK…HLGYVYNEEE (79 aa)) is head domain (RuvB-H). Positions 291, 310, and 315 each coordinate DNA.

It belongs to the RuvB family. Homohexamer. Forms an RuvA(8)-RuvB(12)-Holliday junction (HJ) complex. HJ DNA is sandwiched between 2 RuvA tetramers; dsDNA enters through RuvA and exits via RuvB. An RuvB hexamer assembles on each DNA strand where it exits the tetramer. Each RuvB hexamer is contacted by two RuvA subunits (via domain III) on 2 adjacent RuvB subunits; this complex drives branch migration. In the full resolvosome a probable DNA-RuvA(4)-RuvB(12)-RuvC(2) complex forms which resolves the HJ.

The protein resides in the cytoplasm. It carries out the reaction ATP + H2O = ADP + phosphate + H(+). In terms of biological role, the RuvA-RuvB-RuvC complex processes Holliday junction (HJ) DNA during genetic recombination and DNA repair, while the RuvA-RuvB complex plays an important role in the rescue of blocked DNA replication forks via replication fork reversal (RFR). RuvA specifically binds to HJ cruciform DNA, conferring on it an open structure. The RuvB hexamer acts as an ATP-dependent pump, pulling dsDNA into and through the RuvAB complex. RuvB forms 2 homohexamers on either side of HJ DNA bound by 1 or 2 RuvA tetramers; 4 subunits per hexamer contact DNA at a time. Coordinated motions by a converter formed by DNA-disengaged RuvB subunits stimulates ATP hydrolysis and nucleotide exchange. Immobilization of the converter enables RuvB to convert the ATP-contained energy into a lever motion, pulling 2 nucleotides of DNA out of the RuvA tetramer per ATP hydrolyzed, thus driving DNA branch migration. The RuvB motors rotate together with the DNA substrate, which together with the progressing nucleotide cycle form the mechanistic basis for DNA recombination by continuous HJ branch migration. Branch migration allows RuvC to scan DNA until it finds its consensus sequence, where it cleaves and resolves cruciform DNA. This Lactococcus lactis subsp. cremoris (strain SK11) protein is Holliday junction branch migration complex subunit RuvB.